A 127-amino-acid chain; its full sequence is Small ribosomal subunit protein eS8 (127 aa).

Residues M1–K24 form a disordered region.

It belongs to the eukaryotic ribosomal protein eS8 family. In terms of assembly, part of the 30S ribosomal subunit.

This chain is Small ribosomal subunit protein eS8, found in Methanothrix thermoacetophila (strain DSM 6194 / JCM 14653 / NBRC 101360 / PT) (Methanosaeta thermophila).